The following is a 640-amino-acid chain: Threonine--tRNA ligase (640 aa).

The 61-residue stretch at Met1–Thr61 folds into the TGS domain. The tract at residues Asp242–Pro533 is catalytic. 3 residues coordinate Zn(2+): Cys333, His384, and His510.

This sequence belongs to the class-II aminoacyl-tRNA synthetase family. In terms of assembly, homodimer. The cofactor is Zn(2+).

Its subcellular location is the cytoplasm. The enzyme catalyses tRNA(Thr) + L-threonine + ATP = L-threonyl-tRNA(Thr) + AMP + diphosphate + H(+). Catalyzes the attachment of threonine to tRNA(Thr) in a two-step reaction: L-threonine is first activated by ATP to form Thr-AMP and then transferred to the acceptor end of tRNA(Thr). Also edits incorrectly charged L-seryl-tRNA(Thr). This is Threonine--tRNA ligase from Azotobacter vinelandii (strain DJ / ATCC BAA-1303).